We begin with the raw amino-acid sequence, 408 residues long: UDP-glucose 4-epimerase 2 (408 aa).

13–44 (TVLVTGGAGYIGSHAVLQLLLAGFRAVVVDNL) provides a ligand contact to NAD(+). Ser-138 is a binding site for substrate. Tyr-162 (proton acceptor) is an active-site residue. The segment at 369 to 408 (GSPKQNGHCTNGFSESTRHNGHNGYGLVDSAKHNGNGHFH) is disordered. The segment covering 370–383 (SPKQNGHCTNGFSE) has biased composition (polar residues).

The protein belongs to the NAD(P)-dependent epimerase/dehydratase family. It depends on NAD(+) as a cofactor.

The enzyme catalyses UDP-alpha-D-glucose = UDP-alpha-D-galactose. Its pathway is carbohydrate metabolism; galactose metabolism. Functionally, catalyzes the interconversion between UDP-glucose and UDP-galactose. The protein is UDP-glucose 4-epimerase 2 (UGE-2) of Oryza sativa subsp. japonica (Rice).